Here is a 149-residue protein sequence, read N- to C-terminus: Macrodomain Ter protein (149 aa).

Belongs to the MatP family. Homodimer.

The protein localises to the cytoplasm. In terms of biological role, required for spatial organization of the terminus region of the chromosome (Ter macrodomain) during the cell cycle. Prevents early segregation of duplicated Ter macrodomains during cell division. Binds specifically to matS, which is a 13 bp signature motif repeated within the Ter macrodomain. The protein is Macrodomain Ter protein of Vibrio vulnificus (strain CMCP6).